A 294-amino-acid chain; its full sequence is Pyridoxal 5'-phosphate synthase subunit PdxS (294 aa).

D-ribose 5-phosphate is bound at residue Asp24. The active-site Schiff-base intermediate with D-ribose 5-phosphate is the Lys81. Gly153 is a binding site for D-ribose 5-phosphate. Arg165 is a D-glyceraldehyde 3-phosphate binding site. Residues Gly214 and 235-236 (GS) each bind D-ribose 5-phosphate.

Belongs to the PdxS/SNZ family. In the presence of PdxT, forms a dodecamer of heterodimers.

It catalyses the reaction aldehydo-D-ribose 5-phosphate + D-glyceraldehyde 3-phosphate + L-glutamine = pyridoxal 5'-phosphate + L-glutamate + phosphate + 3 H2O + H(+). It participates in cofactor biosynthesis; pyridoxal 5'-phosphate biosynthesis. Catalyzes the formation of pyridoxal 5'-phosphate from ribose 5-phosphate (RBP), glyceraldehyde 3-phosphate (G3P) and ammonia. The ammonia is provided by the PdxT subunit. Can also use ribulose 5-phosphate and dihydroxyacetone phosphate as substrates, resulting from enzyme-catalyzed isomerization of RBP and G3P, respectively. In Bacillus pumilus (strain SAFR-032), this protein is Pyridoxal 5'-phosphate synthase subunit PdxS.